Consider the following 132-residue polypeptide: Urease subunit beta (132 aa).

It belongs to the urease beta subunit family. In terms of assembly, heterotrimer of UreA (gamma), UreB (beta) and UreC (alpha) subunits. Three heterotrimers associate to form the active enzyme.

It is found in the cytoplasm. The catalysed reaction is urea + 2 H2O + H(+) = hydrogencarbonate + 2 NH4(+). It functions in the pathway nitrogen metabolism; urea degradation; CO(2) and NH(3) from urea (urease route): step 1/1. The protein is Urease subunit beta of Natronomonas pharaonis (strain ATCC 35678 / DSM 2160 / CIP 103997 / JCM 8858 / NBRC 14720 / NCIMB 2260 / Gabara) (Halobacterium pharaonis).